The chain runs to 627 residues: Pentatricopeptide repeat-containing protein At2g15630, mitochondrial (627 aa).

The N-terminal 29 residues, methionine 1 to leucine 29, are a transit peptide targeting the mitochondrion. PPR repeat units lie at residues serine 154 to proline 188, lysine 189 to serine 223, asparagine 224 to proline 258, threonine 259 to proline 293, aspartate 294 to valine 324, aspartate 326 to proline 360, threonine 361 to leucine 395, aspartate 396 to proline 430, threonine 431 to proline 465, aspartate 466 to proline 500, aspartate 501 to proline 535, aspartate 536 to proline 570, and threonine 571 to proline 605.

It belongs to the PPR family. P subfamily.

It is found in the mitochondrion. This Arabidopsis thaliana (Mouse-ear cress) protein is Pentatricopeptide repeat-containing protein At2g15630, mitochondrial.